We begin with the raw amino-acid sequence, 355 residues long: Chemerin-like receptor 2 (355 aa).

Over 1 to 41 the chain is Extracellular; that stretch reads MEDLEETLFEEFENYSYALDYYSLESDLEEKVQLGVVHWVS. N-linked (GlcNAc...) asparagine glycosylation occurs at asparagine 14. The helical transmembrane segment at 42 to 62 threads the bilayer; that stretch reads LVLYCLSFVLGIPGNAIVIWF. At 63–73 the chain is on the cytoplasmic side; it reads TGFKWKKTVST. The helical transmembrane segment at 74 to 94 threads the bilayer; sequence LWFLNLAIADFIFLLFLPLYI. At 95–112 the chain is on the extracellular side; sequence SYVVMNFHWPFGIWLCKA. Cysteine 110 and cysteine 187 form a disulfide bridge. The chain crosses the membrane as a helical span at residues 113–133; that stretch reads NSFTAQLNMFASVFFLTVISL. At 134–154 the chain is on the cytoplasmic side; the sequence is DHYIHLIHPVLSHRHRTLKNS. A helical transmembrane segment spans residues 155–175; sequence LIVIIFIWLLASLIGGPALYF. The Extracellular portion of the chain corresponds to 176–210; the sequence is RDTVEFNNHTLCYNNFQKHDPDLTVIRHHVLTWVK. A helical transmembrane segment spans residues 211–231; that stretch reads FIVGYLFPLLTMSICYLCLIF. Over 232-247 the chain is Cytoplasmic; that stretch reads KVKKRSILISSRHFWT. Residues 248 to 268 traverse the membrane as a helical segment; that stretch reads ILAVVVAFVVCWTPYHLFSIW. Residues 269-286 lie on the Extracellular side of the membrane; the sequence is ELTIHHNSYSHHVMQAGI. Residues 287 to 307 form a helical membrane-spanning segment; sequence PLSTGLAFLNSCLNPILYVLI. The Cytoplasmic segment spans residues 308 to 355; sequence SKKFQARFRSSVAEILKYTLWEVSCSGTVSEQLRNSETKNLCLLETAQ.

This sequence belongs to the chemokine-like receptor (CMKLR) family.

The protein resides in the cell membrane. Functionally, receptor for chemoattractant adipokine chemerin/RARRES2 suggesting a role for this receptor in the regulation of inflammation and energy homesotasis. Signals mainly via beta-arrestin pathway. Binding of RARRES2 activates weakly G proteins, calcium mobilization and MAPK1/MAPK3 (ERK1/2) phosphorylation too. Acts also as a receptor for TAFA1, mediates its effects on neuronal stem-cell proliferation and differentiation via the activation of ROCK/ERK and ROCK/STAT3 signaling pathway. This is Chemerin-like receptor 2 (CMKLR2) from Macaca mulatta (Rhesus macaque).